We begin with the raw amino-acid sequence, 138 residues long: Ribosome maturation factor RimP (138 aa).

It belongs to the RimP family.

It localises to the cytoplasm. In terms of biological role, required for maturation of 30S ribosomal subunits. This Campylobacter concisus (strain 13826) protein is Ribosome maturation factor RimP.